A 562-amino-acid chain; its full sequence is Delta-1-pyrroline-5-carboxylate dehydrogenase, mitochondrial (562 aa).

The transit peptide at 1 to 23 (MLPLPSLRRSLLSHAWRGAGLRW) directs the protein to the mitochondrion. An N6-succinyllysine modification is found at lysine 30. Position 43 is a phosphoserine (serine 43). Lysine 51 is subject to N6-acetyllysine. 5 positions are modified to N6-acetyllysine; alternate: lysine 92, lysine 98, lysine 113, lysine 129, and lysine 174. N6-succinyllysine; alternate occurs at positions 92, 98, 113, 129, and 174. NAD(+) contacts are provided by residues serine 207, lysine 232, and 285-289 (GSVPT). Glutamate 313 (proton acceptor) is an active-site residue. The residue at position 317 (lysine 317) is an N6-acetyllysine. Lysine 346 bears the N6-succinyllysine mark. The Nucleophile role is filled by cysteine 347. Lysine 357 is subject to N6-acetyllysine; alternate. Lysine 357 carries the post-translational modification N6-succinyllysine; alternate. An N6-acetyllysine mark is found at lysine 364 and lysine 375. Position 394 is an N6-succinyllysine (lysine 394). Residue glutamate 446 coordinates NAD(+). Position 461 is an N6-acetyllysine (lysine 461). Position 508 is an N6-acetyllysine; alternate (lysine 508). N6-succinyllysine; alternate is present on lysine 508. Serine 512 is a substrate binding site. An N6-acetyllysine mark is found at lysine 530 and lysine 551.

Belongs to the aldehyde dehydrogenase family. As to quaternary structure, homodimer. Acetylation of Lys-98, Lys-113 and Lys-401 is observed in liver mitochondria from fasted mice but not from fed mice.

It is found in the mitochondrion matrix. It catalyses the reaction L-glutamate 5-semialdehyde + NAD(+) + H2O = L-glutamate + NADH + 2 H(+). The protein operates within amino-acid degradation; L-proline degradation into L-glutamate; L-glutamate from L-proline: step 2/2. Its function is as follows. Irreversible conversion of delta-1-pyrroline-5-carboxylate (P5C), derived either from proline or ornithine, to glutamate. This is a necessary step in the pathway interconnecting the urea and tricarboxylic acid cycles. The preferred substrate is glutamic gamma-semialdehyde, other substrates include succinic, glutaric and adipic semialdehydes. This Mus musculus (Mouse) protein is Delta-1-pyrroline-5-carboxylate dehydrogenase, mitochondrial (Aldh4a1).